The primary structure comprises 418 residues: Deoxyribonuclease Tat-D (418 aa).

A divalent metal cation-binding residues include Glu-185, His-226, His-277, and Asp-327.

It belongs to the metallo-dependent hydrolases superfamily. TatD-type hydrolase family. Mg(2+) is required as a cofactor.

It is found in the cytoplasm. Its function is as follows. Has both endo- and exonuclease activities. Incises double-stranded DNA without obvious specificity via its endonuclease activity and excises the DNA from the 3'-to 5'-end by its exonuclease activity. May have a role in apoptosis. The chain is Deoxyribonuclease Tat-D from Saccharomyces cerevisiae (strain ATCC 204508 / S288c) (Baker's yeast).